The following is a 267-amino-acid chain: NAD-capped RNA hydrolase NudC (267 aa).

Arg-70 contacts substrate. 2 residues coordinate Zn(2+): Cys-99 and Cys-102. Glu-112 is a binding site for substrate. Residues Cys-117 and Cys-122 each contribute to the Zn(2+) site. Position 127 (Tyr-127) interacts with substrate. One can recognise a Nudix hydrolase domain in the interval 128-257 (PVICPSIIVA…TIARALIEAT (130 aa)). Ala-166, Glu-182, and Glu-186 together coordinate a divalent metal cation. Positions 167–188 (GFVEVGESFEQTIHREVFEETG) match the Nudix box motif. 200–207 (QPWAFPNS) contributes to the substrate binding site. Glu-227 contributes to the a divalent metal cation binding site. Ala-250 is a binding site for substrate.

The protein belongs to the Nudix hydrolase family. NudC subfamily. In terms of assembly, homodimer. The cofactor is Mg(2+). Mn(2+) serves as cofactor. Requires Zn(2+) as cofactor.

It carries out the reaction a 5'-end NAD(+)-phospho-ribonucleoside in mRNA + H2O = a 5'-end phospho-adenosine-phospho-ribonucleoside in mRNA + beta-nicotinamide D-ribonucleotide + 2 H(+). The enzyme catalyses NAD(+) + H2O = beta-nicotinamide D-ribonucleotide + AMP + 2 H(+). It catalyses the reaction NADH + H2O = reduced beta-nicotinamide D-ribonucleotide + AMP + 2 H(+). Its function is as follows. mRNA decapping enzyme that specifically removes the nicotinamide adenine dinucleotide (NAD) cap from a subset of mRNAs by hydrolyzing the diphosphate linkage to produce nicotinamide mononucleotide (NMN) and 5' monophosphate mRNA. The NAD-cap is present at the 5'-end of some mRNAs and stabilizes RNA against 5'-processing. Has preference for mRNAs with a 5'-end purine. Catalyzes the hydrolysis of a broad range of dinucleotide pyrophosphates. In Mannheimia succiniciproducens (strain KCTC 0769BP / MBEL55E), this protein is NAD-capped RNA hydrolase NudC.